Reading from the N-terminus, the 249-residue chain is ATP synthase subunit a (249 aa).

6 helical membrane-spanning segments follow: residues 26 to 46 (FTNVSAFMVATVVLASGFLYL), 84 to 104 (FFPFVFSLFMFVLVANFIGLF), 114 to 134 (IIVTFALSLLVIGTVIFYGFF), 143 to 163 (LFVPSGVPGIIVPLVVLIEII), 185 to 205 (ITLKVFAGFVVSLSSLGALGI), and 208 to 228 (TVLPLLMTVAITALEFLVAFL).

This sequence belongs to the ATPase A chain family. As to quaternary structure, F-type ATPases have 2 components, CF(1) - the catalytic core - and CF(0) - the membrane proton channel. CF(1) has five subunits: alpha(3), beta(3), gamma(1), delta(1), epsilon(1). CF(0) has three main subunits: a(1), b(2) and c(9-12). The alpha and beta chains form an alternating ring which encloses part of the gamma chain. CF(1) is attached to CF(0) by a central stalk formed by the gamma and epsilon chains, while a peripheral stalk is formed by the delta and b chains.

Its subcellular location is the cell inner membrane. Key component of the proton channel; it plays a direct role in the translocation of protons across the membrane. The polypeptide is ATP synthase subunit a (Brucella ovis (strain ATCC 25840 / 63/290 / NCTC 10512)).